The primary structure comprises 31 residues: L-amino-acid oxidase (31 aa).

The protein belongs to the flavin monoamine oxidase family. FIG1 subfamily. In terms of assembly, homodimer; non-covalently linked. Requires FAD as cofactor. Post-translationally, N-glycosylated. Expressed by the venom gland.

The protein resides in the secreted. It carries out the reaction an L-alpha-amino acid + O2 + H2O = a 2-oxocarboxylate + H2O2 + NH4(+). The catalysed reaction is L-leucine + O2 + H2O = 4-methyl-2-oxopentanoate + H2O2 + NH4(+). The enzyme catalyses L-phenylalanine + O2 + H2O = 3-phenylpyruvate + H2O2 + NH4(+). It catalyses the reaction L-histidine + O2 + H2O = 3-(imidazol-5-yl)pyruvate + H2O2 + NH4(+). Its function is as follows. Catalyzes an oxidative deamination of predominantly hydrophobic and aromatic L-amino acids, thus producing hydrogen peroxide that may contribute to the diverse toxic effects of this enzyme. Is moderately active on L-Leu, L-His, and L-Phe, and very weakly active on L-Thr, and L-Cys. Exhibits diverse biological activities, such as hemorrhage, hemolysis, edema, antibacterial and antiparasitic activities, as well as regulation of platelet aggregation. Its effect on platelets is controversial, since it either induces aggregation or inhibits agonist-induced aggregation. These different effects are probably due to different experimental conditions. Inhibits growth of B.subtilis strain ATCC 6633 (MIC=32 uM), E.faecalis strain ATCC 12953 (MIC=32 uM), S.aureus strain ATCC 29213 (MIC=32 uM), S.pyogenes strain ATCC 19615 (MIC=8 uM), E.coli strain ATCC 8739 (MIC=4 uM), K.pneumoniae strain ATCC 13885 (MIC=2 uM), P.mirabilis strain ATCC 25933 (MIC=2 uM), P.aeruginosa strain ATCC 15442 (MIC=8 uM) and S.typhimurium strain ATCC 14028 (MIC=8 uM). This is L-amino-acid oxidase from Bothrops mattogrossensis (Pitviper).